Here is a 260-residue protein sequence, read N- to C-terminus: Dolichol-phosphate mannosyltransferase subunit 1 (260 aa).

Ala-2 is modified (N-acetylalanine). 2 positions are modified to phosphoserine: Ser-3 and Ser-9. 11 residues coordinate GDP-alpha-D-mannose: Pro-32, Tyr-34, Glu-36, Ile-63, Asp-65, Asp-118, Ala-119, Asp-120, Arg-147, Arg-234, and Lys-240. Position 120 (Asp-120) interacts with Mg(2+). Asp-120 contacts Mn(2+).

Belongs to the glycosyltransferase 2 family. Component of the dolichol-phosphate mannose (DPM) synthase complex composed of DPM1, DPM2 and DPM3; within the complex, directly interacts with DPM3. This interaction stabilizes DPM1. Mg(2+) serves as cofactor. Requires Mn(2+) as cofactor. The cofactor is Ca(2+).

Its subcellular location is the endoplasmic reticulum. It catalyses the reaction a di-trans,poly-cis-dolichyl phosphate + GDP-alpha-D-mannose = a di-trans,poly-cis-dolichyl beta-D-mannosyl phosphate + GDP. It participates in protein modification; protein glycosylation. Transfers mannose from GDP-mannose to dolichol monophosphate to form dolichol phosphate mannose (Dol-P-Man) which is the mannosyl donor in pathways leading to N-glycosylation, glycosyl phosphatidylinositol membrane anchoring, and O-mannosylation of proteins; catalytic subunit of the dolichol-phosphate mannose (DPM) synthase complex. The polypeptide is Dolichol-phosphate mannosyltransferase subunit 1 (DPM1) (Homo sapiens (Human)).